The following is a 749-amino-acid chain: Taperin (749 aa).

The disordered stretch occupies residues 144–348 (PAAPCRRGSP…IRPSSKPDME (205 aa)). 3 stretches are compositionally biased toward polar residues: residues 169–179 (SAATRTPTNRS), 230–239 (LQKTGSNSFT), and 250–266 (VNRS…SPTG). Ser-274 is subject to Phosphoserine. The span at 323 to 335 (QRQWVSSATSAND) shows a compositional bias: polar residues. Residues 337–347 (FEIRPSSKPDM) show a composition bias toward basic and acidic residues. Phosphoserine is present on residues Ser-401, Ser-457, and Ser-501. Disordered stretches follow at residues 502–586 (EEEA…TTLE), 636–673 (FEYP…SEKP), and 730–749 (LTPA…ALYF). 2 stretches are compositionally biased toward polar residues: residues 534-544 (ELLNRGSNTFT) and 558-570 (HLSQ…QQGA). Over residues 647 to 668 (EEAEEEEEEEGEEDGEEEEVGP) the composition is skewed to acidic residues.

Belongs to the taperin family. As to quaternary structure, interacts with GRXCR2; the interaction restricts TPRN to the stereocilum basal region. Interacts with actin ACTB; the interaction may stabilize stereocilia. Interacts with CLIC5. Interacts with PTPRQ. TPRN, CLIC5 and PTPQR form concentric rings at the base of stereocilia and may form a complex. Interacts with phosphatase PPP1CA; the interaction results in inhibition of PPP1CA phosphatase activity. Interacts with DNA damage response proteins XRCC6/KU70, XRCC5/KU80, PARP1, TOP1 and TOP2A; these interactions recruit TPRN to sites of DNA damage where it may play a role in DNA repair. As to expression, in the organ of Corti, expressed in the inner ear hair cell stereocilia and the supporting cells (at protein level). Expressed in the sensory epithelia of the organ of Corti and vestibular end organs and, to a lesser extent, in Reisner's membrane and the spiral ligament (at protein level). At postnatal day 2, expression is detected in cochlea, liver, brain, kidney, heart and lung.

It is found in the cell projection. It localises to the stereocilium. Its subcellular location is the microvillus. The protein localises to the nucleus. The protein resides in the nucleoplasm. It is found in the cytoplasm. Functionally, essential for hearing. Required for maintenance of stereocilia on both inner and outer hair cells. Necessary for the integrity of the stereociliary rootlet. May act as an actin cytoskeleton regulator involved in the regulation of actin dynamics at the pointed end in hair cells. Forms rings at the base of stereocilia and binds actin filaments in the stereocilia which may stabilize the stereocilia. Acts as a strong inhibitor of PPP1CA phosphatase activity. Recruited to sites of DNA damage and may play a role in DNA damage repair. The sequence is that of Taperin (Tprn) from Mus musculus (Mouse).